Consider the following 923-residue polypeptide: Inorganic phosphate transporter PHO87 (923 aa).

An SPX domain is found at 1–334; sequence MRFSHFLKYN…HMNTRQELIE (334 aa). Topologically, residues 1 to 461 are extracellular; sequence MRFSHFLKYN…KLFFGKRAMK (461 aa). Disordered regions lie at residues 40–74 and 86–107; these read ETPT…SSSK and FGSK…IDGN. The span at 95 to 104 shows a compositional bias: basic and acidic residues; that stretch reads KRGDSDEKAI. A Glycyl lysine isopeptide (Lys-Gly) (interchain with G-Cter in ubiquitin) cross-link involves residue K102. N-linked (GlcNAc...) asparagine glycans are attached at residues N162, N202, and N274. Residues 462–482 traverse the membrane as a helical segment; that stretch reads IGFIIIVTGVLLGVKTFNDPV. Residues 483–493 are Cytoplasmic-facing; it reads EHRCMALVECC. Residues 494–514 traverse the membrane as a helical segment; the sequence is AFLWASEAIPLHITGLLVPLL. The Extracellular portion of the chain corresponds to 515–537; the sequence is TVLFRVLKDDDGKVMGAAAASTE. A helical membrane pass occupies residues 538-558; the sequence is ILGTMWSSTIMILLAGFTLGE. Residues 559–583 are Cytoplasmic-facing; the sequence is ALSQYNVAKVLASWLLALAGTKPRN. A helical membrane pass occupies residues 584-604; that stretch reads VLLMAMSVVFFLSMWISNVAS. Over 605-627 the chain is Extracellular; that stretch reads PVLTYSLLTPLLDPLDYTSPFAK. The helical transmembrane segment at 628–648 threads the bilayer; sequence ALVMGVALSADIGGMASPISS. At 649–667 the chain is on the cytoplasmic side; sequence PQNIISMQYLKPYGIGWGQ. The chain crosses the membrane as a helical span at residues 668 to 688; sequence FFAVALPTGILSMLCSWALMI. Residues 689-707 are Extracellular-facing; the sequence is LTFKIGKTKLEKFKPIRTR. The helical transmembrane segment at 708–728 threads the bilayer; that stretch reads FTIKQYFIIIVTIATILLWCV. Topologically, residues 729 to 735 are cytoplasmic; that stretch reads ESQIESA. The helical transmembrane segment at 736–756 threads the bilayer; sequence FGSSGEIAVIPIVLFFGTGLL. Over 757–767 the chain is Extracellular; that stretch reads STKDFNTFPWS. A helical transmembrane segment spans residues 768–788; it reads IVVLAMGGIALGKAVSSSGLL. The Cytoplasmic segment spans residues 789–802; sequence VTIARALQKKIQND. Residues 803-823 form a helical membrane-spanning segment; the sequence is GVFAILCIFGILMLVVGTFVS. At 824-849 the chain is on the extracellular side; that stretch reads HTVSAIIIIPLVQEVGDKLSDPKAAP. The chain crosses the membrane as a helical span at residues 850–870; that stretch reads ILVFGCALLASCGMGLASSGF. The Cytoplasmic segment spans residues 871–898; it reads PNVTAISMTDKKGNRWLTVGAFISRGVP. The chain crosses the membrane as a helical span at residues 899–919; it reads ASLLAFVCVITLGYGISSSVL. Topologically, residues 920-923 are extracellular; that stretch reads KGST.

Belongs to the CitM (TC 2.A.11) transporter family.

Its subcellular location is the membrane. Its function is as follows. Involved in the uptake of inorganic phosphate. This Saccharomyces cerevisiae (strain ATCC 204508 / S288c) (Baker's yeast) protein is Inorganic phosphate transporter PHO87 (PHO87).